The sequence spans 99 residues: Large ribosomal subunit protein bL27 (99 aa).

The propeptide occupies 1 to 10; sequence MKLIFDIQLF.

The protein belongs to the bacterial ribosomal protein bL27 family. The N-terminus is cleaved by ribosomal processing cysteine protease Prp.

The polypeptide is Large ribosomal subunit protein bL27 (Caldicellulosiruptor bescii (strain ATCC BAA-1888 / DSM 6725 / KCTC 15123 / Z-1320) (Anaerocellum thermophilum)).